We begin with the raw amino-acid sequence, 409 residues long: O-methyltransferase pyiA (409 aa).

Positions 1 to 21 are enriched in polar residues; that stretch reads MASQDGTTELLSQSVNSTCIP. The segment at 1–46 is disordered; the sequence is MASQDGTTELLSQSVNSTCIPGSTYHVDRGRASSASTPPTSPPLSE. Asp271 contacts S-adenosyl-L-methionine. His317 (proton acceptor) is an active-site residue.

It belongs to the class I-like SAM-binding methyltransferase superfamily. Cation-independent O-methyltransferase family.

Its pathway is mycotoxin biosynthesis. O-methyltransferase; part of the gene cluster that mediates the biosynthesis of the mycotoxin pyrichalasin H, a tyrosine-derived cytochalasan that inhibits the growth of rice seedlings, but also inhibits lymphocyte capping and actin polymerization and alters cell morphology. Pyrichalasin H is indicated as the responsible agent for the genus-specific pathogenicity of M.grisea toward crabgrass. The first step in the pathway is catalyzed by the O-methyltransferase pyiA which methylates free tyrosine to generate the precursor O-methyltyrosine. The hybrid PKS-NRPS pyiS, assisted by the enoyl reductase pyiC, are responsible for fusion of the O-methyltyrosine precursor and the polyketide backbone. The polyketide synthase module (PKS) of pyiS is responsible for the synthesis of the polyketide backbone and the downstream nonribosomal peptide synthetase (NRPS) amidates the carboxyl end of the polyketide with the O-methyltyrosine precursor. As the NRPS A-domain demonstrates substrate tolerance, pyiS can also use phenylalanine, tyrosine and even para-chlorophenylalanine as amino acid precursor, which leads to the production of novel cytochalasans, including halogenated cytochalasans. Because pyiS lacks a designated enoylreductase (ER) domain, the required activity is provided the enoyl reductase pyiC. Reduction by the hydrolyase pyiE leads to 1,5-dihydropyrrolone, which is substrate for dehydration and intra-molecular Diels-Alder cyclization by the Diels-Alderase pyiF to yield the required isoindolone-fused macrocycle. The tailoring cytochrome P450 monooxygenases piyD and piyG catalyze the hydroxylation at C-18 and C-7, respectivily, whereas the short-chain dehydrogenase/reductase pyiH reduces the carbonyl at C-21 in preparation for the transfer of an acetyl group by the acetyltransferase pyiB. These 3 reactions whose order is not clear yet, lead to the production of O-methylpyrichalasin J, a deacetylated pyrichalasin H. Finally, pyiB to converts O-methylpyrichalasin J into the final product pyrichalasin H via acetylation of C-21. This chain is O-methyltransferase pyiA, found in Pyricularia grisea (Crabgrass-specific blast fungus).